The following is a 980-amino-acid chain: Thrombospondin-4 (980 aa).

A signal peptide spans 1–42 (MTMITPSSKLTLTKGNKSWSSTRCGAFLLLHLVLQPWQRAGA). In terms of domain architecture, Laminin G-like spans 43-210 (QATPQVFDLL…LEELKLVVRG (168 aa)). An EGF-like 1 domain is found at 304 to 343 (PTRRCDSSPCFRGVRCTDTRDGFQCGPCPDGYTGNGITCS). 21 disulfides stabilise this stretch: C308-C319, C313-C328, C331-C342, C348-C359, C353-C368, C371-C395, C401-C412, C406-C421, C424-C436, C442-C456, C450-C466, C468-C480, C496-C501, C506-C526, C542-C562, C565-C585, C601-C621, C624-C644, C662-C682, C702-C722, and C738-C959. Residues 344 to 381 (DVDECKYHPCYPGVRCTNLAPGFRCDACPVGFTGPMVQ) enclose the EGF-like 2; calcium-binding domain. The EGF-like 3; calcium-binding domain occupies 397 to 434 (DVDECRNGACVLNSICINTLGSYRCGPCKPGYTGDQTR). The region spanning 438-481 (TERSCRNPEQNPCSVHAQCIEERQGDVTCVCGVGWAGRAGYVCG) is the EGF-like 4 domain. 8 TSP type-3 repeats span residues 482-514 (KDVD…NSGQ), 515-550 (EDAD…NVDQ), 551-573 (RNTD…NNDQ), 574-609 (KDTD…NRDQ), 610-632 (QDRD…NPNQ), 633-670 (SDVD…NSAQ), 671-710 (LDTD…NPAQ), and 711-746 (EDSN…EITL). A disordered region spans residues 596–691 (NILDNCPRVP…CDDDDDNDGM (96 aa)). The span at 605–615 (PNRDQQDRDGD) shows a compositional bias: basic and acidic residues. An N-linked (GlcNAc...) asparagine glycan is attached at N631. The segment covering 659–671 (TDNCPTVINSAQL) has biased composition (polar residues). The segment covering 679 to 690 (GDECDDDDDNDG) has biased composition (acidic residues). The TSP C-terminal domain occupies 750 to 964 (RAYQTVVLDP…LKYRCNDTIP (215 aa)). N-linked (GlcNAc...) asparagine glycosylation is present at N960.

This sequence belongs to the thrombospondin family. Homopentamer; disulfide-linked. Interacts with PTBP3. Interacts (via EGF-like 3; calcium-binding domain) with ATF6 and facilitates its processing, activation and nuclear translocation. Interacts with NOTCH1. In terms of tissue distribution, mainly expressed in astrocytes, and in ressponse to peripheral nerve injury, significantly up-regulated in the dorsal spinal cord (at protein level).

Its subcellular location is the endoplasmic reticulum. The protein resides in the sarcoplasmic reticulum. The protein localises to the secreted. It localises to the extracellular space. It is found in the extracellular matrix. Functionally, adhesive glycoprotein that mediates cell-to-cell and cell-to-matrix interactions and is involved in various processes including cellular proliferation, migration, adhesion and attachment, inflammatory response to CNS injury, regulation of vascular inflammation and adaptive responses of the heart to pressure overload and in myocardial function and remodeling. Binds to structural extracellular matrix (ECM) proteins and modulates the ECM in response to tissue damage, contributing to cardioprotective and adaptive ECM remodeling. Plays a role in ER stress response, via its interaction with the activating transcription factor 6 alpha (ATF6) which produces adaptive ER stress response factors and protects myocardium from pressure overload. May contribute to spinal presynaptic hypersensitivity and neuropathic pain states after peripheral nerve injury. May play a role in regulating protective astrogenesis from the subventricular zone (SVZ) niche after injury in a NOTCH1-dependent manner. The chain is Thrombospondin-4 (Thbs4) from Rattus norvegicus (Rat).